The following is a 109-amino-acid chain: MPNGTPTLNRPLARLALRITSCAHQGLERLIRLLHLLLHLGRSLLDLFQTLRTALTQPSTSIFSLTRLPLLLPPLRLLLLLLLPSPPRQPALASRLTQPNRPNRGRLAK.

Positions 89-109 (QPALASRLTQPNRPNRGRLAK) are disordered.

Its subcellular location is the host cytoplasm. This Psittacidae (parrots) protein is Avian agnoprotein 2b.